A 141-amino-acid polypeptide reads, in one-letter code: Hemoglobin subunit alpha-A (141 aa).

The region spanning Val-1 to Arg-141 is the Globin domain. His-58 contacts O2. Position 87 (His-87) interacts with heme b.

The protein belongs to the globin family. Heterotetramer of two alpha chains and two beta chains. Red blood cells.

Functionally, involved in oxygen transport from the lung to the various peripheral tissues. This Passer montanus (Eurasian tree sparrow) protein is Hemoglobin subunit alpha-A (HBAA).